A 203-amino-acid polypeptide reads, in one-letter code: Protein GrpE (203 aa).

Basic and acidic residues predominate over residues 1–20; the sequence is MSSKEQNVHEEQVSKEKEGM. Residues 1 to 38 form a disordered region; sequence MSSKEQNVHEEQVSKEKEGMESVMNESQEQVKSEDAQA.

Belongs to the GrpE family. Homodimer.

It is found in the cytoplasm. In terms of biological role, participates actively in the response to hyperosmotic and heat shock by preventing the aggregation of stress-denatured proteins, in association with DnaK and GrpE. It is the nucleotide exchange factor for DnaK and may function as a thermosensor. Unfolded proteins bind initially to DnaJ; upon interaction with the DnaJ-bound protein, DnaK hydrolyzes its bound ATP, resulting in the formation of a stable complex. GrpE releases ADP from DnaK; ATP binding to DnaK triggers the release of the substrate protein, thus completing the reaction cycle. Several rounds of ATP-dependent interactions between DnaJ, DnaK and GrpE are required for fully efficient folding. This chain is Protein GrpE, found in Proteus mirabilis (strain HI4320).